A 276-amino-acid chain; its full sequence is Shikimate dehydrogenase (NADP(+)) (276 aa).

Residues 18 to 20 (SKS) and Thr65 each bind shikimate. Residue Lys69 is the Proton acceptor of the active site. Glu81 is a binding site for NADP(+). Residues Asn90 and Asp106 each coordinate shikimate. NADP(+) contacts are provided by residues 130–134 (GAGGA), 154–159 (NRTSSK), and Met217. Tyr219 is a binding site for shikimate. Gly241 contacts NADP(+).

It belongs to the shikimate dehydrogenase family. In terms of assembly, homodimer.

It carries out the reaction shikimate + NADP(+) = 3-dehydroshikimate + NADPH + H(+). Its pathway is metabolic intermediate biosynthesis; chorismate biosynthesis; chorismate from D-erythrose 4-phosphate and phosphoenolpyruvate: step 4/7. Its function is as follows. Involved in the biosynthesis of the chorismate, which leads to the biosynthesis of aromatic amino acids. Catalyzes the reversible NADPH linked reduction of 3-dehydroshikimate (DHSA) to yield shikimate (SA). The chain is Shikimate dehydrogenase (NADP(+)) from Vibrio atlanticus (strain LGP32) (Vibrio splendidus (strain Mel32)).